The primary structure comprises 369 residues: Glutamine synthetase 2 cytoplasmic (369 aa).

Residues 32–112 form the GS beta-grasp domain; the sequence is VQATYVWIDG…VMCDTYKFDG (81 aa). Residues 119 to 369 form the GS catalytic domain; it reads KRKTCLEVAN…AILRTICLDE (251 aa).

The protein belongs to the glutamine synthetase family. In terms of assembly, homooctamer.

The protein resides in the cytoplasm. The enzyme catalyses L-glutamate + NH4(+) + ATP = L-glutamine + ADP + phosphate + H(+). This is Glutamine synthetase 2 cytoplasmic (Gs2) from Drosophila melanogaster (Fruit fly).